Here is a 139-residue protein sequence, read N- to C-terminus: NADPH-dependent 7-cyano-7-deazaguanine reductase (139 aa).

Residue cysteine 34 is the Thioimide intermediate of the active site. The Proton donor role is filled by aspartate 41. Substrate is bound by residues 56–58 and 75–76; these read IEL and HE.

It belongs to the GTP cyclohydrolase I family. QueF type 1 subfamily.

The protein resides in the cytoplasm. It carries out the reaction 7-aminomethyl-7-carbaguanine + 2 NADP(+) = 7-cyano-7-deazaguanine + 2 NADPH + 3 H(+). It participates in tRNA modification; tRNA-queuosine biosynthesis. Catalyzes the NADPH-dependent reduction of 7-cyano-7-deazaguanine (preQ0) to 7-aminomethyl-7-deazaguanine (preQ1). This Nitrosomonas europaea (strain ATCC 19718 / CIP 103999 / KCTC 2705 / NBRC 14298) protein is NADPH-dependent 7-cyano-7-deazaguanine reductase.